The following is a 160-amino-acid chain: Cytochrome b6-f complex subunit 4 (160 aa).

The next 3 membrane-spanning stretches (helical) occupy residues 36–56, 95–115, and 131–151; these read LLYI…GLAV, LLGV…PFLE, and TVFL…TLPI.

This sequence belongs to the cytochrome b family. PetD subfamily. In terms of assembly, the 4 large subunits of the cytochrome b6-f complex are cytochrome b6, subunit IV (17 kDa polypeptide, petD), cytochrome f and the Rieske protein, while the 4 small subunits are petG, petL, petM and petN. The complex functions as a dimer.

Its subcellular location is the plastid. The protein localises to the chloroplast thylakoid membrane. Functionally, component of the cytochrome b6-f complex, which mediates electron transfer between photosystem II (PSII) and photosystem I (PSI), cyclic electron flow around PSI, and state transitions. This Oryza nivara (Indian wild rice) protein is Cytochrome b6-f complex subunit 4.